The sequence spans 523 residues: Probable aminopeptidase NPEPL1 (523 aa).

2 residues coordinate Zn(2+): lysine 260 and aspartate 265. Residue lysine 272 is part of the active site. Zn(2+) is bound by residues aspartate 283, aspartate 342, and glutamate 344. Arginine 346 is a catalytic residue.

This sequence belongs to the peptidase M17 family. Zn(2+) is required as a cofactor. The cofactor is Mn(2+). In terms of tissue distribution, ubiquitously expressed.

Probably catalyzes the removal of unsubstituted N-terminal amino acids from various peptides. This chain is Probable aminopeptidase NPEPL1 (NPEPL1), found in Homo sapiens (Human).